Reading from the N-terminus, the 1823-residue chain is WD repeat-containing protein DDB_G0292056 (1823 aa).

A disordered region spans residues 1–68; that stretch reads MTYNNNNNYL…IGNSSGGGGV (68 aa). Low complexity predominate over residues 16-61; the sequence is TSTSTSTSTSTPTSTKTSPLNTSSSSNILKSNSRNPSPNNPTNIGN. WD repeat units lie at residues 138–177, 182–222, 228–267, 270–310, 312–354, and 360–405; these read QSKW…YPLL, SHQR…KAVK, SHIL…QELN, VHSA…PKST, ITSN…YSTP, and GHTD…KDLF. 9 disordered regions span residues 418–461, 530–562, 649–687, 714–778, 805–840, 883–940, 966–996, 1014–1058, and 1122–1186; these read PTTT…LLST, QPDD…NNNN, NITE…GFLK, IDIS…YRPG, ILTN…TNDQ, IPNN…SSTS, SSSS…NPPR, NNIT…NDNP, and QQLV…NGKS. Composition is skewed to low complexity over residues 419–432 and 440–461; these read TTTT…TTTT and LNES…LLST. Composition is skewed to low complexity over residues 654–680 and 717–748; these read NNNN…NNNN and SQQQ…QQQQ. Composition is skewed to polar residues over residues 749–768 and 827–840; these read FLTA…SPTS and MNAS…TNDQ. 4 stretches are compositionally biased toward low complexity: residues 885–926, 966–993, 1014–1041, and 1127–1183; these read NNNK…SSNN, SSSS…KNIN, NNIT…NRLN, and SSSP…NNGN. A WD 7 repeat occupies 1207–1250; sequence ANSYILSGKPVEEICKYNSELAEKENRKDLVKLWNTLGMITDSK. Disordered stretches follow at residues 1264–1307, 1697–1725, and 1764–1823; these read SHFG…LHQS, QQQP…HTHN, and PQQE…MFSN. Residues 1282–1293 are compositionally biased toward low complexity; it reads STGIASSTGSNS. A compositionally biased stretch (polar residues) spans 1710–1725; sequence MSGTSHYHQQQPHTHN.

The protein is WD repeat-containing protein DDB_G0292056 of Dictyostelium discoideum (Social amoeba).